A 43-amino-acid polypeptide reads, in one-letter code: Protein PsbN (43 aa).

A helical membrane pass occupies residues threonine 5–phenylalanine 27.

It belongs to the PsbN family.

The protein localises to the plastid. The protein resides in the chloroplast thylakoid membrane. Its function is as follows. May play a role in photosystem I and II biogenesis. The protein is Protein PsbN of Chara vulgaris (Common stonewort).